We begin with the raw amino-acid sequence, 317 residues long: Transaldolase (317 aa).

Residue lysine 132 is the Schiff-base intermediate with substrate of the active site.

The protein belongs to the transaldolase family. Type 1 subfamily. As to quaternary structure, homodimer.

The protein resides in the cytoplasm. It carries out the reaction D-sedoheptulose 7-phosphate + D-glyceraldehyde 3-phosphate = D-erythrose 4-phosphate + beta-D-fructose 6-phosphate. It functions in the pathway carbohydrate degradation; pentose phosphate pathway; D-glyceraldehyde 3-phosphate and beta-D-fructose 6-phosphate from D-ribose 5-phosphate and D-xylulose 5-phosphate (non-oxidative stage): step 2/3. Its function is as follows. Transaldolase is important for the balance of metabolites in the pentose-phosphate pathway. In Yersinia pseudotuberculosis serotype O:3 (strain YPIII), this protein is Transaldolase.